Here is a 248-residue protein sequence, read N- to C-terminus: PF03932 family protein CutC (248 aa).

This sequence belongs to the CutC family. As to quaternary structure, homodimer.

It localises to the cytoplasm. In Salmonella newport (strain SL254), this protein is PF03932 family protein CutC.